The following is a 337-amino-acid chain: MLVLGIETSCDETGVALYDTCQGLLGHTLYSQVDMHREYGGVVPELASRDHIRRILPLIRQLFRQSDTSLESVDAIACTQGPGLAGALLTGASFSSALAFARNIPVLNIHHLEGHLLSPLLSDPAPDFPFVALLVSGGHTQLMRVDGIGQYRLLGETVDDAAGEAFDKTAKLLDLDYPGGKLLAELATQGRAEQFRLPRPMLNSNDLNFSFSGLKTAAALLIGKHEMNSQTRADIAFAFEDAVTDVLVKKSVTALNITGLQQLVVAGGVGANSRLRQKLLHHLSGTDITVFFPALEFCTDNGAMIALAGALRLQQLDERLRAGGSFTVKARWNLEDL.

The Fe cation site is built by His111 and His115. Substrate contacts are provided by residues Leu134–Gly138, Asp167, Gly180, and Asn272. Residue Asp300 coordinates Fe cation.

Belongs to the KAE1 / TsaD family. Fe(2+) is required as a cofactor.

The protein localises to the cytoplasm. The catalysed reaction is L-threonylcarbamoyladenylate + adenosine(37) in tRNA = N(6)-L-threonylcarbamoyladenosine(37) in tRNA + AMP + H(+). Its function is as follows. Required for the formation of a threonylcarbamoyl group on adenosine at position 37 (t(6)A37) in tRNAs that read codons beginning with adenine. Is involved in the transfer of the threonylcarbamoyl moiety of threonylcarbamoyl-AMP (TC-AMP) to the N6 group of A37, together with TsaE and TsaB. TsaD likely plays a direct catalytic role in this reaction. This is tRNA N6-adenosine threonylcarbamoyltransferase from Nitrosomonas europaea (strain ATCC 19718 / CIP 103999 / KCTC 2705 / NBRC 14298).